A 156-amino-acid polypeptide reads, in one-letter code: Peptide deformylase (156 aa).

C90 and H132 together coordinate Fe cation. Residue E133 is part of the active site. H136 is a binding site for Fe cation.

This sequence belongs to the polypeptide deformylase family. Fe(2+) is required as a cofactor.

It carries out the reaction N-terminal N-formyl-L-methionyl-[peptide] + H2O = N-terminal L-methionyl-[peptide] + formate. In terms of biological role, removes the formyl group from the N-terminal Met of newly synthesized proteins. Requires at least a dipeptide for an efficient rate of reaction. N-terminal L-methionine is a prerequisite for activity but the enzyme has broad specificity at other positions. The chain is Peptide deformylase from Natranaerobius thermophilus (strain ATCC BAA-1301 / DSM 18059 / JW/NM-WN-LF).